Reading from the N-terminus, the 298-residue chain is Ribosomal RNA small subunit methyltransferase A (298 aa).

Positions 35, 37, 62, 83, 108, and 133 each coordinate S-adenosyl-L-methionine.

This sequence belongs to the class I-like SAM-binding methyltransferase superfamily. rRNA adenine N(6)-methyltransferase family. RsmA subfamily.

It is found in the cytoplasm. It catalyses the reaction adenosine(1518)/adenosine(1519) in 16S rRNA + 4 S-adenosyl-L-methionine = N(6)-dimethyladenosine(1518)/N(6)-dimethyladenosine(1519) in 16S rRNA + 4 S-adenosyl-L-homocysteine + 4 H(+). Functionally, specifically dimethylates two adjacent adenosines (A1518 and A1519) in the loop of a conserved hairpin near the 3'-end of 16S rRNA in the 30S particle. May play a critical role in biogenesis of 30S subunits. This Streptococcus pyogenes serotype M4 (strain MGAS10750) protein is Ribosomal RNA small subunit methyltransferase A.